A 200-amino-acid chain; its full sequence is Recombination protein RecR (200 aa).

The C4-type zinc finger occupies 59-74 (CSVCFHLSADPVCDIC). The Toprim domain maps to 82 to 176 (TVICVVADSR…RVTRIAFGLP (95 aa)).

Belongs to the RecR family.

Its function is as follows. May play a role in DNA repair. It seems to be involved in an RecBC-independent recombinational process of DNA repair. It may act with RecF and RecO. This Acaryochloris marina (strain MBIC 11017) protein is Recombination protein RecR.